Here is a 1065-residue protein sequence, read N- to C-terminus: NLR family CARD domain-containing protein 3 (1065 aa).

The span at 1–10 (MRKQEVRTGR) shows a compositional bias: basic and acidic residues. Residues 1-62 (MRKQEVRTGR…PLGPCSNDSR (62 aa)) are disordered. One can recognise an NACHT domain in the interval 139–460 (RVSITIGVAG…YCFTHLSLQE (322 aa)). Residue 145–152 (GVAGMGKT) participates in ATP binding. Positions 457–460 (SLQE) match the TRAF6-binding motif. 16 LRR repeats span residues 617–639 (EANL…LLYC), 641–663 (KLRL…VLSG), 665–688 (DCRI…ALAR), 693–716 (NRSL…ALAD), 721–744 (NRTL…SMAE), 749–772 (NRTL…RMAD), 777–800 (NRSL…ALAE), 805–828 (NQGL…ALMG), 833–856 (NQTL…AIAH), 861–884 (NSTL…AIAV), 889–912 (NRTL…ALGQ), 917–940 (NRSL…AVAR), 945–968 (NTAL…VLGE), 973–996 (NRTL…ALAN), 1001–1029 (NSSL…LSGN), and 1031–1052 (RLQH…MISE).

This sequence belongs to the NLRP family. As to quaternary structure, directly interacts (via CARD) with TMEM173/STING; this interaction reduces TMEM173 trafficking to the perinuclear region in response to interferon stimulatory DNA. Also interacts, but to a lesser extent, with TBK1. Interacts with TRAF6; this interaction results in decreased TRAF6 'Lys-63'-linked polyubiquitination, but leaves 'Lys-48'-linked chains unchanged, promoting TRAF6 protein degradation. Interacts with PIK3R1/PIK3R2; this interaction disrupts the association between PIK3R1/PIK3R2 and the p110 catalytic subunit PIK3CA/PIK3CB/PIK3CD and reduces PIK3R1/PIK3R2 activation. Weakly interacts with PYCARD/ASC. Interacts with CASP1 and CASP5.

Its subcellular location is the cytoplasm. In terms of biological role, negative regulator of the innate immune response. Attenuates signaling pathways activated by Toll-like receptors (TLRs) and the DNA sensor STING/TMEM173 in response to pathogen-associated molecular patterns, such as intracellular poly(dA:dT), but not poly(I:C), or in response to DNA virus infection, including that of Herpes simplex virus 1 (HSV1). May affect TLR4 signaling by acting at the level of TRAF6 ubiquitination, decreasing the activating 'Lys-63'-linked ubiquitination and leaving unchanged the degradative 'Lys-48'-linked ubiquitination. Inhibits the PI3K-AKT-mTOR pathway possibly by directly interacting with the posphatidylinositol 3-kinase regulatory subunit p85 (PIK3R1/PIK3R2) and disrupting the association between PIK3R1/PIK3R2 and the catalytic subunit p110 (PIK3CA/PIK3CB/PIK3CD) and reducing PIK3R1/PIK3R2 activation. Via its regulation of the PI3K-AKT-mTOR pathway, controls cell proliferation, predominantly in intestinal epithelial cells. May also affect NOD1- or NOD2-mediated NF-kappa-B activation. Might also affect the inflammatory response by preventing NLRP3 inflammasome formation, CASP1 cleavage and IL1B maturation. The chain is NLR family CARD domain-containing protein 3 (NLRC3) from Homo sapiens (Human).